Consider the following 124-residue polypeptide: Small ribosomal subunit protein uS13 (124 aa).

Positions 94–124 (GLPLRGQRTKNNSRTRKGRRKTVANKKKATK) are disordered. Residues 100 to 124 (QRTKNNSRTRKGRRKTVANKKKATK) show a composition bias toward basic residues.

It belongs to the universal ribosomal protein uS13 family. In terms of assembly, part of the 30S ribosomal subunit. Forms a loose heterodimer with protein S19. Forms two bridges to the 50S subunit in the 70S ribosome.

Functionally, located at the top of the head of the 30S subunit, it contacts several helices of the 16S rRNA. In the 70S ribosome it contacts the 23S rRNA (bridge B1a) and protein L5 of the 50S subunit (bridge B1b), connecting the 2 subunits; these bridges are implicated in subunit movement. Contacts the tRNAs in the A and P-sites. This is Small ribosomal subunit protein uS13 from Christiangramia forsetii (strain DSM 17595 / CGMCC 1.15422 / KT0803) (Gramella forsetii).